A 715-amino-acid polypeptide reads, in one-letter code: Polyribonucleotide nucleotidyltransferase (715 aa).

Positions 487 and 493 each coordinate Mg(2+). Residues 554–613 (PRIETFKIATDKIREVIGTGGKVIREIVEKTGAKVNIDDDGTVKVASSDGESIKAAIKWI) enclose the KH domain. Residues 623-691 (NAIYDGTVVK…DRGKTRLSMK (69 aa)) enclose the S1 motif domain. Positions 696-715 (ETGEDLEAKQKAAEGATAAE) are disordered.

Belongs to the polyribonucleotide nucleotidyltransferase family. Mg(2+) serves as cofactor.

Its subcellular location is the cytoplasm. It catalyses the reaction RNA(n+1) + phosphate = RNA(n) + a ribonucleoside 5'-diphosphate. Functionally, involved in mRNA degradation. Catalyzes the phosphorolysis of single-stranded polyribonucleotides processively in the 3'- to 5'-direction. This is Polyribonucleotide nucleotidyltransferase from Rhodopseudomonas palustris (strain BisB18).